Consider the following 496-residue polypeptide: Isocitrate dehydrogenase [NADP] (496 aa).

NADP(+) contacts are provided by Leu-88 and Thr-90. Residues Ser-98, Asn-100, Arg-104, Arg-114, and Arg-137 each coordinate D-threo-isocitrate. Positions 193, 229, and 232 each coordinate NADP(+). Asp-248 provides a ligand contact to Mg(2+). Positions 277, 281, 282, 283, 285, 286, and 293 each coordinate NADP(+).

This sequence belongs to the isocitrate and isopropylmalate dehydrogenases family. In terms of assembly, homodimer. Requires Mg(2+) as cofactor. The cofactor is Mn(2+).

It carries out the reaction D-threo-isocitrate + NADP(+) = 2-oxoglutarate + CO2 + NADPH. Functionally, catalyzes the oxidative decarboxylation of isocitrate to 2-oxoglutarate and carbon dioxide with the concomitant reduction of NADP(+). In Thermus thermophilus (strain ATCC 27634 / DSM 579 / HB8), this protein is Isocitrate dehydrogenase [NADP] (icd).